We begin with the raw amino-acid sequence, 297 residues long: Protoheme IX farnesyltransferase (297 aa).

A run of 9 helical transmembrane segments spans residues P12–G32, Y36–F56, V85–A105, L108–M128, V133–A153, L163–F183, I209–A229, G230–Q250, and F266–V286.

The protein belongs to the UbiA prenyltransferase family. Protoheme IX farnesyltransferase subfamily.

It localises to the cell inner membrane. It carries out the reaction heme b + (2E,6E)-farnesyl diphosphate + H2O = Fe(II)-heme o + diphosphate. It functions in the pathway porphyrin-containing compound metabolism; heme O biosynthesis; heme O from protoheme: step 1/1. Its function is as follows. Converts heme B (protoheme IX) to heme O by substitution of the vinyl group on carbon 2 of heme B porphyrin ring with a hydroxyethyl farnesyl side group. The chain is Protoheme IX farnesyltransferase from Sodalis glossinidius (strain morsitans).